Reading from the N-terminus, the 375-residue chain is DNA replication and repair protein RecF (375 aa).

Position 30 to 37 (30 to 37 (GENAQGKT)) interacts with ATP.

Belongs to the RecF family.

Its subcellular location is the cytoplasm. The RecF protein is involved in DNA metabolism; it is required for DNA replication and normal SOS inducibility. RecF binds preferentially to single-stranded, linear DNA. It also seems to bind ATP. This chain is DNA replication and repair protein RecF, found in Bacillus thuringiensis (strain Al Hakam).